Consider the following 78-residue polypeptide: Acyl carrier protein (78 aa).

The region spanning 2–77 is the Carrier domain; sequence SDTAERIKKI…DAVSYIDEHK (76 aa). Ser37 is subject to O-(pantetheine 4'-phosphoryl)serine.

This sequence belongs to the acyl carrier protein (ACP) family. Post-translationally, 4'-phosphopantetheine is transferred from CoA to a specific serine of apo-ACP by AcpS. This modification is essential for activity because fatty acids are bound in thioester linkage to the sulfhydryl of the prosthetic group.

The protein localises to the cytoplasm. It functions in the pathway lipid metabolism; fatty acid biosynthesis. Its function is as follows. Carrier of the growing fatty acid chain in fatty acid biosynthesis. This is Acyl carrier protein from Zymomonas mobilis subsp. mobilis (strain ATCC 31821 / ZM4 / CP4).